The chain runs to 287 residues: Energy-coupling factor transporter ATP-binding protein EcfA2 (287 aa).

One can recognise an ABC transporter domain in the interval 3-246 (VKFSQVSYVY…TNYVNQLHLD (244 aa)). Residue 40–47 (GQTGSGKS) participates in ATP binding.

This sequence belongs to the ABC transporter superfamily. Energy-coupling factor EcfA family. In terms of assembly, forms a stable energy-coupling factor (ECF) transporter complex composed of 2 membrane-embedded substrate-binding proteins (S component), 2 ATP-binding proteins (A component) and 2 transmembrane proteins (T component).

It is found in the cell membrane. In terms of biological role, ATP-binding (A) component of a common energy-coupling factor (ECF) ABC-transporter complex. Unlike classic ABC transporters this ECF transporter provides the energy necessary to transport a number of different substrates. This Staphylococcus saprophyticus subsp. saprophyticus (strain ATCC 15305 / DSM 20229 / NCIMB 8711 / NCTC 7292 / S-41) protein is Energy-coupling factor transporter ATP-binding protein EcfA2.